The following is a 379-amino-acid chain: RIB43A-like with coiled-coils protein 1 (379 aa).

Coiled-coil stretches lie at residues 43-111 (EALN…RCEL) and 285-337 (IRKV…EFRR).

This sequence belongs to the RIB43A family. In terms of assembly, microtubule inner protein component of sperm flagellar doublet microtubules.

Its subcellular location is the cytoplasm. The protein localises to the cytoskeleton. It is found in the flagellum axoneme. This chain is RIB43A-like with coiled-coils protein 1 (RIBC1), found in Bos taurus (Bovine).